Here is a 249-residue protein sequence, read N- to C-terminus: uncharacterized protein (249 aa).

This sequence belongs to the chlamydial CPn_0206/CT203/TC_0475 family.

This is an uncharacterized protein from Chlamydia muridarum (strain MoPn / Nigg).